Here is a 499-residue protein sequence, read N- to C-terminus: Probable cytosol aminopeptidase (499 aa).

Residues K263 and D268 each contribute to the Mn(2+) site. K275 is a catalytic residue. Residues D286, D345, and E347 each contribute to the Mn(2+) site. The active site involves R349.

Belongs to the peptidase M17 family. Mn(2+) serves as cofactor.

The protein resides in the cytoplasm. The enzyme catalyses Release of an N-terminal amino acid, Xaa-|-Yaa-, in which Xaa is preferably Leu, but may be other amino acids including Pro although not Arg or Lys, and Yaa may be Pro. Amino acid amides and methyl esters are also readily hydrolyzed, but rates on arylamides are exceedingly low.. It catalyses the reaction Release of an N-terminal amino acid, preferentially leucine, but not glutamic or aspartic acids.. In terms of biological role, presumably involved in the processing and regular turnover of intracellular proteins. Catalyzes the removal of unsubstituted N-terminal amino acids from various peptides. The protein is Probable cytosol aminopeptidase of Chlamydia caviae (strain ATCC VR-813 / DSM 19441 / 03DC25 / GPIC) (Chlamydophila caviae).